A 481-amino-acid chain; its full sequence is GTPase Obg (481 aa).

One can recognise an Obg domain in the interval 2-159; the sequence is TTFVDRVVLH…LDAVLELKSV (158 aa). The OBG-type G domain maps to 160-330; the sequence is ADIGLVGYPS…LMFAMGELVA (171 aa). Residues 166-173, 191-195, 212-215, 282-285, and 311-313 contribute to the GTP site; these read GYPSAGKS, FTTLV, DVPG, NKID, and SAA. Mg(2+) contacts are provided by Ser-173 and Thr-193. Residues 348–426 form the OCT domain; that stretch reads PKAVDDAGFT…IGEREFDWHP (79 aa). The interval 440–481 is disordered; the sequence is DQRLAEKTQRPSAAERLAARKARRQRPGDEPESDELDGDSGE. Acidic residues predominate over residues 469-481; it reads EPESDELDGDSGE.

It belongs to the TRAFAC class OBG-HflX-like GTPase superfamily. OBG GTPase family. As to quaternary structure, monomer. Mg(2+) serves as cofactor.

It is found in the cytoplasm. An essential GTPase which binds GTP, GDP and possibly (p)ppGpp with moderate affinity, with high nucleotide exchange rates and a fairly low GTP hydrolysis rate. Plays a role in control of the cell cycle, stress response, ribosome biogenesis and in those bacteria that undergo differentiation, in morphogenesis control. The polypeptide is GTPase Obg (Salinispora arenicola (strain CNS-205)).